The chain runs to 581 residues: Meiotic PUF family protein 1 (581 aa).

Positions 225 to 580 (FPNGTTEPFE…RIAALVEKSK (356 aa)) constitute a PUM-HD domain. 8 Pumilio repeats span residues 291–326 (TILP…SFSY), 327–362 (FLKK…NLIE), 363–398 (ELIE…GIFD), 403–438 (KMQG…TCLD), 439–474 (EIIN…RILN), 475–510 (SLLK…RYVK), 518–554 (ELPT…LMAE), and 555–581 (HLKK…KSKS).

RNA-binding protein essential for meiotic progression. In Schizosaccharomyces pombe (strain 972 / ATCC 24843) (Fission yeast), this protein is Meiotic PUF family protein 1 (mpf1).